A 167-amino-acid chain; its full sequence is UPF0336 protein MAP_4109 (167 aa).

The region spanning Gly-21–Lys-124 is the MaoC-like domain.

Belongs to the UPF0336 family.

In Mycolicibacterium paratuberculosis (strain ATCC BAA-968 / K-10) (Mycobacterium paratuberculosis), this protein is UPF0336 protein MAP_4109.